We begin with the raw amino-acid sequence, 147 residues long: Ribonuclease H (147 aa).

Positions 5–141 (ARKQITLYSD…CDELARNEAE (137 aa)) constitute an RNase H type-1 domain. Mg(2+)-binding residues include D14, E52, D74, and D133.

This sequence belongs to the RNase H family. As to quaternary structure, monomer. Mg(2+) serves as cofactor.

It is found in the cytoplasm. It catalyses the reaction Endonucleolytic cleavage to 5'-phosphomonoester.. Endonuclease that specifically degrades the RNA of RNA-DNA hybrids. The chain is Ribonuclease H from Sulfurovum sp. (strain NBC37-1).